Here is a 514-residue protein sequence, read N- to C-terminus: 1,25-dihydroxyvitamin D(3) 24-hydroxylase, mitochondrial (514 aa).

The transit peptide at 1–35 directs the protein to the mitochondrion; the sequence is MSCPIDKRRPLIAFLRRLRDLGQPPRSVTSKAHVK. Cysteine 462 contacts heme.

It belongs to the cytochrome P450 family. It depends on heme as a cofactor.

The protein resides in the mitochondrion. The enzyme catalyses calcitriol + 2 reduced [adrenodoxin] + O2 + 2 H(+) = calcitetrol + 2 oxidized [adrenodoxin] + H2O. The catalysed reaction is calcitetrol + 2 reduced [adrenodoxin] + O2 + 2 H(+) = (1S)-1,25-dihydroxy-24-oxocalciol + 2 oxidized [adrenodoxin] + 2 H2O. It carries out the reaction (1S)-1,25-dihydroxy-24-oxocalciol + 2 reduced [adrenodoxin] + O2 + 2 H(+) = (1S)-1,23,25-trihydroxy-24-oxocalciol + 2 oxidized [adrenodoxin] + H2O. It catalyses the reaction (1S)-1,23-dihydroxy-24,25,26,27-tetranorcalciol + 2 reduced [adrenodoxin] + O2 + 2 H(+) = (1S)-1-hydroxy-23-oxo-24,25,26,27-tetranorcalciol + 2 oxidized [adrenodoxin] + 2 H2O. The enzyme catalyses (1S)-1-hydroxy-23-oxo-24,25,26,27-tetranorcalciol + 2 reduced [adrenodoxin] + O2 + H(+) = calcitroate + 2 oxidized [adrenodoxin] + H2O. The catalysed reaction is calcidiol + 2 reduced [adrenodoxin] + O2 + 2 H(+) = secalciferol + 2 oxidized [adrenodoxin] + H2O. It carries out the reaction secalciferol + 2 reduced [adrenodoxin] + O2 + 2 H(+) = 25-hydroxy-24-oxocalciol + 2 oxidized [adrenodoxin] + 2 H2O. It catalyses the reaction 25-hydroxy-24-oxocalciol + 2 reduced [adrenodoxin] + O2 + 2 H(+) = 23S,25-dihydroxy-24-oxocholecalciferol + 2 oxidized [adrenodoxin] + H2O. The enzyme catalyses 20S,23-dihydroxycholecalciferol + 2 reduced [adrenodoxin] + O2 + 2 H(+) = 20S,23,25-trihydroxycholecalciferol + 2 oxidized [adrenodoxin] + H2O. The catalysed reaction is 20S,23-dihydroxycholecalciferol + 2 reduced [adrenodoxin] + O2 + 2 H(+) = 20S,23,24-trihydroxycholecalciferol + 2 oxidized [adrenodoxin] + H2O. It carries out the reaction 20S-hydroxycholecalciferol + 2 reduced [adrenodoxin] + O2 + 2 H(+) = 20S,25-dihydroxycholecalciferol + 2 oxidized [adrenodoxin] + H2O. It catalyses the reaction 20S-hydroxycholecalciferol + 2 reduced [adrenodoxin] + O2 + 2 H(+) = 20S,24S-dihydroxycholecalciferol + 2 oxidized [adrenodoxin] + H2O. The enzyme catalyses 20S-hydroxycholecalciferol + 2 reduced [adrenodoxin] + O2 + 2 H(+) = 20S,24R-dihydroxycholecalciferol + 2 oxidized [adrenodoxin] + H2O. A cytochrome P450 monooxygenase with a key role in vitamin D catabolism and calcium homeostasis. Via C24-oxidation pathway, catalyzes the inactivation of both the vitamin D precursor calcidiol (25-hydroxyvitamin D(3)) and the active hormone calcitriol (1-alpha,25-dihydroxyvitamin D(3)). With initial hydroxylation at C-24 (via C24-oxidation pathway), performs a sequential 6-step oxidation of calcitriol leading to the formation of the biliary metabolite calcitroic acid. Hydroxylates at C-24 or C-25 other vitamin D active metabolites, such as CYP11A1-derived secosteroids 20S-hydroxycholecalciferol and 20S,23-dihydroxycholecalciferol. Mechanistically, uses molecular oxygen inserting one oxygen atom into a substrate, and reducing the second into a water molecule, with two electrons provided by NADPH via FDXR/adrenodoxin reductase and FDX1/adrenodoxin. The polypeptide is 1,25-dihydroxyvitamin D(3) 24-hydroxylase, mitochondrial (Mus musculus (Mouse)).